The sequence spans 314 residues: 4-hydroxy-3-methylbut-2-enyl diphosphate reductase (314 aa).

Cys12 contributes to the [4Fe-4S] cluster binding site. (2E)-4-hydroxy-3-methylbut-2-enyl diphosphate contacts are provided by His41 and His74. Residues His41 and His74 each contribute to the dimethylallyl diphosphate site. 2 residues coordinate isopentenyl diphosphate: His41 and His74. [4Fe-4S] cluster is bound at residue Cys96. His124 lines the (2E)-4-hydroxy-3-methylbut-2-enyl diphosphate pocket. Position 124 (His124) interacts with dimethylallyl diphosphate. Residue His124 participates in isopentenyl diphosphate binding. Catalysis depends on Glu126, which acts as the Proton donor. (2E)-4-hydroxy-3-methylbut-2-enyl diphosphate is bound at residue Thr167. A [4Fe-4S] cluster-binding site is contributed by Cys197. Positions 225, 226, 227, and 269 each coordinate (2E)-4-hydroxy-3-methylbut-2-enyl diphosphate. Positions 225, 226, 227, and 269 each coordinate dimethylallyl diphosphate. Ser225, Ser226, Asn227, and Ser269 together coordinate isopentenyl diphosphate.

Belongs to the IspH family. It depends on [4Fe-4S] cluster as a cofactor.

It catalyses the reaction isopentenyl diphosphate + 2 oxidized [2Fe-2S]-[ferredoxin] + H2O = (2E)-4-hydroxy-3-methylbut-2-enyl diphosphate + 2 reduced [2Fe-2S]-[ferredoxin] + 2 H(+). The enzyme catalyses dimethylallyl diphosphate + 2 oxidized [2Fe-2S]-[ferredoxin] + H2O = (2E)-4-hydroxy-3-methylbut-2-enyl diphosphate + 2 reduced [2Fe-2S]-[ferredoxin] + 2 H(+). Its pathway is isoprenoid biosynthesis; dimethylallyl diphosphate biosynthesis; dimethylallyl diphosphate from (2E)-4-hydroxy-3-methylbutenyl diphosphate: step 1/1. The protein operates within isoprenoid biosynthesis; isopentenyl diphosphate biosynthesis via DXP pathway; isopentenyl diphosphate from 1-deoxy-D-xylulose 5-phosphate: step 6/6. Functionally, catalyzes the conversion of 1-hydroxy-2-methyl-2-(E)-butenyl 4-diphosphate (HMBPP) into a mixture of isopentenyl diphosphate (IPP) and dimethylallyl diphosphate (DMAPP). Acts in the terminal step of the DOXP/MEP pathway for isoprenoid precursor biosynthesis. This is 4-hydroxy-3-methylbut-2-enyl diphosphate reductase from Psychromonas ingrahamii (strain DSM 17664 / CCUG 51855 / 37).